We begin with the raw amino-acid sequence, 542 residues long: MNPFVNLFIQHSKKQIFLNNNKNNILLNFNSKLYSTITYKNNNNNNNNQIINNKTIMKRKNNEIIQTEEDDDNDNGGIHDCDSCDEVDNEEIIPESPPSKKLQQQQQQQQQQQSKLKPKQTSITDFFSPTVKTSKADKISPFFSNVNNASTTNTTTNNKNVNKKTTTTTTTKKRNNKDEENEDDNEEEEEEEEEEEDKKSKKKTTTTTTTTTTTAYKKKSSPKKKKVNPTENKFSTINYKDDQYVQKEEYSSSKKEKLENVKIGGHVSIKNGYPTLIQSVVAQGFKAVAFFTNPPRTWKHHTVKLDDSIKFKQSCKSLNFDVNCILPHGSYFLNLGSPNKENLQKSRDLMIHEMKNCEILGVKHFNFHPGSHLNEISESESIKIVAESLDYILERTKDVVAVIECTAGQGTNLGYTFEHLRDMIALVKDKTRVGVCLDTCHMFAAGYNISTKSNCDVIFQEFDKVVGFKYLKGVHLNDSKSTCGSKLDRHENIGKGHIGTPCFKYLVNDKRFQNIPMILETVGPYDQEVKLLYSFIEDDDKK.

2 disordered regions span residues 89-123 (NEEIIPESPPSKKLQQQQQQQQQQQSKLKPKQTSI) and 141-234 (PFFS…ENKF). Low complexity-rich tracts occupy residues 99–115 (SKKLQQQQQQQQQQQSK) and 147–170 (NNASTTNTTTNNKNVNKKTTTTTT). The stretch at 171–206 (TKKRNNKDEENEDDNEEEEEEEEEEEDKKSKKKTTT) forms a coiled coil. Residues 179 to 196 (EENEDDNEEEEEEEEEEE) are compositionally biased toward acidic residues. The span at 205–215 (TTTTTTTTTTA) shows a compositional bias: low complexity. A compositionally biased stretch (basic residues) spans 216–227 (YKKKSSPKKKKV). The Nuclear localization signal signature appears at 222 to 227 (PKKKKV). His-328, His-368, Glu-404, Asp-438, His-441, His-475, Asp-488, His-490, and Glu-520 together coordinate Zn(2+).

Belongs to the AP endonuclease 2 family. The cofactor is Zn(2+).

It localises to the nucleus. It catalyses the reaction Endonucleolytic cleavage to 5'-phosphooligonucleotide end-products.. In terms of biological role, plays a role in DNA repair. It cleaves phosphodiester bonds at apurinic or apyrimidinic sites (AP sites) to produce new 5'-ends that are base-free deoxyribose 5-phosphate residues. The chain is Endonuclease 4 homolog (apnA) from Dictyostelium discoideum (Social amoeba).